A 152-amino-acid chain; its full sequence is Ribonuclease HI (152 aa).

An RNase H type-1 domain is found at 1 to 142 (MDSKVVIYTD…ADKLAVQGRE (142 aa)). Residues Asp10, Glu48, Asp70, and Asp134 each contribute to the Mg(2+) site.

Belongs to the RNase H family. In terms of assembly, monomer. Requires Mg(2+) as cofactor.

It is found in the cytoplasm. The enzyme catalyses Endonucleolytic cleavage to 5'-phosphomonoester.. Functionally, endonuclease that specifically degrades the RNA of RNA-DNA hybrids. The polypeptide is Ribonuclease HI (rnhA) (Rickettsia prowazekii (strain Madrid E)).